The primary structure comprises 458 residues: Probable mitochondrial chaperone BCS1-B (458 aa).

Over 1 to 26 (MENVITNNNKGLPKSILKFIPEPIQP) the chain is Mitochondrial intermembrane. A helical transmembrane segment spans residues 27 to 47 (LFENPFFSAGFGLIGVGSILA). The Mitochondrial matrix portion of the chain corresponds to 48–458 (MGRKGFQQAM…INNLNELIKK (411 aa)). Position 248–255 (248–255 (GPPGTGKS)) interacts with ATP.

Belongs to the AAA ATPase family. BCS1 subfamily.

It is found in the mitochondrion inner membrane. It carries out the reaction ATP + H2O = ADP + phosphate + H(+). In terms of biological role, chaperone necessary for the assembly of mitochondrial respiratory chain complex III. This is Probable mitochondrial chaperone BCS1-B (bcsl1b) from Dictyostelium discoideum (Social amoeba).